The following is a 380-amino-acid chain: Epoxyqueuosine reductase (380 aa).

The active-site Proton donor is the Asp-134. The 30-residue stretch at Pro-179–Gln-208 folds into the 4Fe-4S ferredoxin-type 1 domain. Positions 188, 191, 194, 198, 214, 240, 243, and 247 each coordinate [4Fe-4S] cluster. The 33-residue stretch at Pro-226–His-258 folds into the 4Fe-4S ferredoxin-type 2 domain.

The protein belongs to the QueG family. As to quaternary structure, monomer. Requires cob(II)alamin as cofactor. The cofactor is [4Fe-4S] cluster.

It localises to the cytoplasm. The enzyme catalyses epoxyqueuosine(34) in tRNA + AH2 = queuosine(34) in tRNA + A + H2O. It participates in tRNA modification; tRNA-queuosine biosynthesis. In terms of biological role, catalyzes the conversion of epoxyqueuosine (oQ) to queuosine (Q), which is a hypermodified base found in the wobble positions of tRNA(Asp), tRNA(Asn), tRNA(His) and tRNA(Tyr). In Bacillus anthracis, this protein is Epoxyqueuosine reductase.